We begin with the raw amino-acid sequence, 60 residues long: Metallothionein (60 aa).

Residues 1-28 form a beta region; sequence MDPCDCSKTGKCNCGGSCTCTNCSCTSC. A divalent metal cation-binding residues include cysteine 4, cysteine 6, cysteine 12, cysteine 14, cysteine 18, cysteine 20, cysteine 23, cysteine 25, cysteine 28, cysteine 32, cysteine 33, cysteine 35, cysteine 36, cysteine 40, cysteine 43, cysteine 47, cysteine 49, cysteine 54, cysteine 58, and cysteine 59. Residues 29-60 are alpha; the sequence is KKSCCACCPSGCTKCASGCVCKGKTCDTTCCQ.

It belongs to the metallothionein superfamily. Type 1 family.

In terms of biological role, metallothioneins have a high content of cysteine residues that bind various heavy metals. This Oryzias latipes (Japanese rice fish) protein is Metallothionein (mt).